A 251-amino-acid polypeptide reads, in one-letter code: Pyrroloquinoline-quinone synthase (251 aa).

Belongs to the PqqC family.

It carries out the reaction 6-(2-amino-2-carboxyethyl)-7,8-dioxo-1,2,3,4,7,8-hexahydroquinoline-2,4-dicarboxylate + 3 O2 = pyrroloquinoline quinone + 2 H2O2 + 2 H2O + H(+). Its pathway is cofactor biosynthesis; pyrroloquinoline quinone biosynthesis. In terms of biological role, ring cyclization and eight-electron oxidation of 3a-(2-amino-2-carboxyethyl)-4,5-dioxo-4,5,6,7,8,9-hexahydroquinoline-7,9-dicarboxylic-acid to PQQ. This chain is Pyrroloquinoline-quinone synthase, found in Pseudomonas savastanoi pv. phaseolicola (strain 1448A / Race 6) (Pseudomonas syringae pv. phaseolicola (strain 1448A / Race 6)).